Consider the following 351-residue polypeptide: Circumsporozoite protein (351 aa).

The N-terminal stretch at 1 to 22 (MKNFILLAVSSILLVDLLPTHF) is a signal peptide. The disordered stretch occupies residues 50–266 (AQVRQSASRG…GQNNQGANVP (217 aa)). Basic and acidic residues predominate over residues 61-96 (GLGEKPKEGADKEKKKEKEKEKEEEPKKPNENKLKQ). The tract at residues 80-88 (KEKEEEPKK) is required for the binding to heparan sulfate proteoglycans (HSPGs) on the surface of host hepatocytes. The tract at residues 93-97 (KLKQP) is region I; contains the proteolytic cleavage site. Over residues 97–219 (PEQPAAGAGG…AGARGEQPAA (123 aa)) the composition is skewed to low complexity. A run of 14 repeats spans residues 101 to 109 (AAGAGGEQP), 110 to 118 (AAGAGGEQP), 119 to 127 (AAGAGGEQP), 128 to 136 (AAGARGEQP), 137 to 145 (AAGAGGEQP), 146 to 154 (AAGAGGEQP), 155 to 163 (AAGAGGEQP), 164 to 172 (AAGAGGEQP), 173 to 181 (AAGAGGEQP), 182 to 190 (AAGARGEQP), 191 to 199 (AAGAGGEQP), 200 to 208 (AAGAGGEQP), 209 to 217 (AAGARGEQP), and 218 to 226 (AAGAGGEQP). The segment at 101 to 226 (AAGAGGEQPA…PAAGAGGEQP (126 aa)) is 14 X 9 AA tandem repeats of A-A-G-A-[GR]-G-E-Q-P. Residues 244–256 (GARGGNAGAGKGQ) are compositionally biased toward gly residues. Positions 277–329 (KIRSSVTTEWTPCSVTCGNGVRIRRKGHAGNKKAEDLTMDDLEVEACVMDKCA) constitute a TSP type-1 domain. Disulfide bonds link Cys289-Cys323 and Cys293-Cys328. Thr292 carries O-linked (Fuc) threonine glycosylation. The GPI-anchor amidated cysteine moiety is linked to residue Cys328. Residues 329 to 351 (AGIFNVVSNSLGLVILLVLALFN) constitute a propeptide, removed in mature form.

The protein belongs to the plasmodium circumsporozoite protein family. During host cell invasion, proteolytically cleaved at the cell membrane in the region I by a papain-like cysteine protease of parasite origin. Cleavage is triggered by the sporozoite contact with highly sulfated heparan sulfate proteoglycans (HSPGs) present on the host hepatocyte cell surface. Cleavage exposes the TSP type-1 (TSR) domain and is required for productive invasion of host hepatocytes but not for adhesion to the host cell membrane. Cleavage is dispensable for sporozoite development in the oocyst, motility and for traversal of host and vector cells. In terms of processing, O-glycosylated; maybe by POFUT2.

It localises to the cell membrane. The protein resides in the cytoplasm. Essential sporozoite protein. In the mosquito vector, required for sporozoite development in the oocyst, migration through the vector hemolymph and entry into the vector salivary glands. In the vertebrate host, required for sporozoite migration through the host dermis and infection of host hepatocytes. Binds to highly sulfated heparan sulfate proteoglycans (HSPGs) on the surface of host hepatocytes. In terms of biological role, in the vertebrate host, binds to highly sulfated heparan sulfate proteoglycans (HSPGs) on the surface of host hepatocytes and is required for sporozoite invasion of the host hepatocytes. This Plasmodium knowlesi (strain nuri) protein is Circumsporozoite protein.